A 415-amino-acid polypeptide reads, in one-letter code: ATP-dependent Clp protease ATP-binding subunit ClpX (415 aa).

The ClpX-type ZB domain occupies 1–53 (MLRSKGDLVLGCSFCGKKEDERRRIVTGHGVSICNYCVERCAEYLRDRKPSAL). 4 residues coordinate Zn(2+): cysteine 12, cysteine 15, cysteine 34, and cysteine 37. An ATP-binding site is contributed by 118–125 (PTGSGKTL).

This sequence belongs to the ClpX chaperone family. Component of the ClpX-ClpP complex. Forms a hexameric ring that, in the presence of ATP, binds to fourteen ClpP subunits assembled into a disk-like structure with a central cavity, resembling the structure of eukaryotic proteasomes.

ATP-dependent specificity component of the Clp protease. It directs the protease to specific substrates. Can perform chaperone functions in the absence of ClpP. In Treponema pallidum (strain Nichols), this protein is ATP-dependent Clp protease ATP-binding subunit ClpX.